Here is a 564-residue protein sequence, read N- to C-terminus: Bicarbonate transporter BicA (564 aa).

Topologically, residues 1–11 are cytoplasmic; the sequence is MQITNKIHFRN. The chain crosses the membrane as a helical span at residues 12 to 37; the sequence is LQGDLFGGVTAAVIALPMALAFGIAS. The Periplasmic portion of the chain corresponds to 38-40; it reads GAG. The chain crosses the membrane as a helical span at residues 41–58; the sequence is ATAGLWGAVIVGFFAALF. At 59-70 the chain is on the cytoplasmic side; sequence GGTPTLISEPTG. Thr-69 serves as a coordination point for hydrogencarbonate. Residues 71–86 traverse the membrane as a helical segment; the sequence is PMTVVQTAVIASLVAA. The Periplasmic portion of the chain corresponds to 87 to 90; the sequence is DPDN. The helical transmembrane segment at 91 to 112 threads the bilayer; it reads GLAMAFTVVMMAGLFQIAFGLL. Topologically, residues 113–122 are cytoplasmic; the sequence is KLGKYVTMMP. Residues 123–145 form a helical membrane-spanning segment; sequence YTVISGFMSGIGIILVILQLAPF. The Periplasmic segment spans residues 146–170; the sequence is LGQASPKGGVIGTLQALPNLVSNVR. A helical transmembrane segment spans residues 171-185; the sequence is PVETLLALMTVGIIW. Topologically, residues 186-196 are cytoplasmic; the sequence is FMPSRWKKFAP. Residues 197 to 211 traverse the membrane as a helical segment; that stretch reads PQLVALVLGTIISIT. Residues 212-240 lie on the Periplasmic side of the membrane; it reads LFGDLDIRRIGEIQAGLPALQLPVFQADQ. A helical membrane pass occupies residues 241–269; sequence LQRMLIDAAVLGMLGCIDALLTSVVADSL. Na(+)-binding residues include Asp-258 and Thr-262. At 270 to 275 the chain is on the cytoplasmic side; that stretch reads TRTEHN. The chain crosses the membrane as a helical span at residues 276–292; that stretch reads SNKELVGQGIGNVMSGL. The Periplasmic portion of the chain corresponds to 293–302; it reads FGGLGGAGAT. Position 300 (Gly-300) interacts with Na(+). Ala-301 is a hydrogencarbonate binding site. Thr-302 contributes to the Na(+) binding site. Residues 303–312 form a helical membrane-spanning segment; that stretch reads MGTVVNIQSG. The Cytoplasmic segment spans residues 313 to 315; that stretch reads GRT. Residues 316 to 338 traverse the membrane as a helical segment; sequence ALSGLIRAMVLLVVILGAAKLAA. Topologically, residues 339 to 341 are periplasmic; it reads TIP. Residues 342 to 357 form a helical membrane-spanning segment; the sequence is LAVLAGIAFKVGVDII. At 358 to 369 the chain is on the cytoplasmic side; the sequence is DWGFLKRAHHVS. The chain crosses the membrane as a helical span at residues 370–390; that stretch reads IKGALIMYAVIVLTVLVDLIA. Residues 391 to 392 lie on the Periplasmic side of the membrane; it reads AV. Residues 393 to 405 form a helical membrane-spanning segment; sequence GIGVFIANILTID. Residues 406 to 564 are Cytoplasmic-facing; it reads RMSALQSKAV…PSSSSVQTTY (159 aa). One can recognise an STAS domain in the interval 432–542; the sequence is KRWLDEGNGR…DDRSEALKDA (111 aa).

The protein belongs to the SLC26A/SulP transporter (TC 2.A.53) family. In terms of assembly, forms homodimers through the STAS cytoplasmic domain.

The protein localises to the cell inner membrane. In terms of biological role, low affinity, high-flux Na(+)-dependent bicarbonate transporter. Involved in carbone dioxide-concentrating mechanisms (CCMs) that accumulate CO(2) and improve photosynthetic carbon fixation. The polypeptide is Bicarbonate transporter BicA (Synechocystis sp. (strain ATCC 27184 / PCC 6803 / Kazusa)).